The chain runs to 82 residues: Host translation inhibitor 5b (82 aa).

Functionally, involved in host translation shutoff without degradating host RNA. By suppressing host gene expression, facilitates the evasion from host type I interferon immune response. In Avian infectious bronchitis virus (strain KB8523) (IBV), this protein is Host translation inhibitor 5b.